Here is a 133-residue protein sequence, read N- to C-terminus: Ribonuclease VapC28 (133 aa).

The PINc domain maps to 1 to 124 (MIVDTSAIIA…LWKGNDFGHT (124 aa)). Residues Asp-4 and Asp-100 each contribute to the Mg(2+) site.

The protein belongs to the PINc/VapC protein family. Mg(2+) serves as cofactor.

Its function is as follows. Toxic component of a type II toxin-antitoxin (TA) system. An RNase. Upon expression in M.smegmatis inhibits colony formation. Its toxic effect is neutralized by coexpression with cognate antitoxin VapB28. This chain is Ribonuclease VapC28, found in Mycobacterium tuberculosis (strain ATCC 25618 / H37Rv).